We begin with the raw amino-acid sequence, 148 residues long: MATSDIQVKELEKRASGQAFELILGPRSKEAAPEFPLSPPKKKDLSLEEIQKKLEAAEERRKSHEAEVLKQLAEKREHEKEVLQKAIEENNNFSKMAEEKLTHKMEANKENREAQMAAKLERLREKDKHIEEVRKNKEGKDPGEAETN.

Residues 4–145 (SDIQVKELEK…NKEGKDPGEA (142 aa)) form the SLD domain. Phosphoserine; by PKA is present on Ser-16. At Ser-38 the chain carries Phosphoserine; by CDK1. The stretch at 41-140 (KKKDLSLEEI…EEVRKNKEGK (100 aa)) forms a coiled coil. Ser-63 is subject to Phosphoserine; by PKA. The interval 122–148 (RLREKDKHIEEVRKNKEGKDPGEAETN) is disordered.

This sequence belongs to the stathmin family. As to quaternary structure, binds to two alpha/beta-tubulin heterodimers. Post-translationally, many different phosphorylated forms are observed depending on specific combinations among the sites which can be phosphorylated. MAPK is responsible for the phosphorylation of stathmin in response to NGF.

It localises to the cytoplasm. The protein localises to the cytoskeleton. Its function is as follows. Involved in the regulation of the microtubule (MT) filament system by destabilizing microtubules. It prevents assembly and promotes disassembly of microtubules. This Gallus gallus (Chicken) protein is Stathmin (STMN1).